The chain runs to 151 residues: Thymosin beta (151 aa).

Repeat copies occupy residues 24–29 (LKKVET), 62–67 (LHSTPV), 100–105 (LKKTET), and 134–139 (LHHVET). Positions 24 to 139 (LKKVETTEKN…DKSALHHVET (116 aa)) are 4 X 6 AA repeat of L-[KH]-[KSH]-[VT]-[EP]-[TV].

Belongs to the thymosin beta family. As to quaternary structure, interacts (via repeats 1, 2 and 4) with G-actin in a 1:3 ratio. Interacts (via repeats 2 and 3) with F-actin. At the comma stage, enriched in the developing nerve ring (at protein level). Ubiquitously expressed in larvae and adults with enrichment in the spermatheca, the intestinal tract and the posterior bulb of the pharynx (at protein level). Expressed in oocytes and in the gonad (at protein level).

It is found in the cytoplasm. It localises to the cell cortex. The protein localises to the cell junction. Its subcellular location is the cytoskeleton. Its function is as follows. Plays an important role in the organization of the cytoskeleton by regulating actin polymerization in two ways. Firstly, by binding to and sequestering actin monomers (G actin) inhibits actin polymerization. Secondly, by binding directly filamentous actin (F actin) promotes actin polymerization. Regulates the formation of cortical actin in oocytes conferring them enough rigidity to sustain the contractions during ovulation. The chain is Thymosin beta from Caenorhabditis elegans.